A 608-amino-acid chain; its full sequence is Sensor protein kinase WalK (608 aa).

2 helical membrane-spanning segments follow: residues 14–34 (LVIV…LYFT) and 182–202 (IFII…FFIA). One can recognise an HAMP domain in the interval 203–255 (RTITRPITDMRNQTVEMSKGNYTQRVKIYGNDEIGELALAFNNLSKRVQEAQA). The 71-residue stretch at 260–330 (EKRRLDSVIT…EIQENNDSFL (71 aa)) folds into the PAS domain. In terms of domain architecture, PAC spans 324–377 (ENNDSFLLDINEDEGIIARVNFSTIVQETGFVTGYIAVLHDVTEQQQVERERRE). Positions 381–599 (NVSHELRTPL…SIFITLPCEV (219 aa)) constitute a Histidine kinase domain. The residue at position 384 (H384) is a Phosphohistidine; by autocatalysis.

Autophosphorylated.

The protein localises to the cell membrane. It catalyses the reaction ATP + protein L-histidine = ADP + protein N-phospho-L-histidine.. In terms of biological role, member of the two-component regulatory system WalK/WalR. WalK functions as a sensor protein kinase which is autophosphorylated at a histidine residue and transfers its phosphate group to WalR. This Staphylococcus haemolyticus (strain JCSC1435) protein is Sensor protein kinase WalK (walK).